The primary structure comprises 125 residues: Small ribosomal subunit protein uS13 (125 aa).

The segment at 97–125 (PLRGQRTKTNARTRKGKRKTVANKKMASK) is disordered.

Belongs to the universal ribosomal protein uS13 family. As to quaternary structure, part of the 30S ribosomal subunit. Forms a loose heterodimer with protein S19. Forms two bridges to the 50S subunit in the 70S ribosome.

In terms of biological role, located at the top of the head of the 30S subunit, it contacts several helices of the 16S rRNA. In the 70S ribosome it contacts the 23S rRNA (bridge B1a) and protein L5 of the 50S subunit (bridge B1b), connecting the 2 subunits; these bridges are implicated in subunit movement. Contacts the tRNAs in the A and P-sites. This Borrelia hermsii (strain HS1 / DAH) protein is Small ribosomal subunit protein uS13.